The primary structure comprises 305 residues: GMP synthase [glutamine-hydrolyzing] subunit B (305 aa).

Residues 2–185 (VDVDSFVEDA…LGLEEIISER (184 aa)) enclose the GMPS ATP-PPase domain. 29-35 (SGGVDSS) contributes to the ATP binding site.

Heterodimer composed of a glutamine amidotransferase subunit (A) and a GMP-binding subunit (B).

The enzyme catalyses XMP + L-glutamine + ATP + H2O = GMP + L-glutamate + AMP + diphosphate + 2 H(+). The protein operates within purine metabolism; GMP biosynthesis; GMP from XMP (L-Gln route): step 1/1. In terms of biological role, catalyzes the synthesis of GMP from XMP. This is GMP synthase [glutamine-hydrolyzing] subunit B from Halobacterium salinarum (strain ATCC 29341 / DSM 671 / R1).